We begin with the raw amino-acid sequence, 359 residues long: Glycerol-3-phosphate dehydrogenase [NAD(P)+] (359 aa).

Positions 11, 12, 32, and 107 each coordinate NADPH. Sn-glycerol 3-phosphate-binding residues include Lys107 and Gly138. Residue Ala142 coordinates NADPH. 5 residues coordinate sn-glycerol 3-phosphate: Lys193, Asp246, Ser256, Arg257, and Asn258. Lys193 serves as the catalytic Proton acceptor. Arg257 contributes to the NADPH binding site. The NADPH site is built by Val281 and Glu283.

Belongs to the NAD-dependent glycerol-3-phosphate dehydrogenase family.

The protein resides in the cytoplasm. The catalysed reaction is sn-glycerol 3-phosphate + NAD(+) = dihydroxyacetone phosphate + NADH + H(+). It catalyses the reaction sn-glycerol 3-phosphate + NADP(+) = dihydroxyacetone phosphate + NADPH + H(+). The protein operates within membrane lipid metabolism; glycerophospholipid metabolism. Functionally, catalyzes the reduction of the glycolytic intermediate dihydroxyacetone phosphate (DHAP) to sn-glycerol 3-phosphate (G3P), the key precursor for phospholipid synthesis. This is Glycerol-3-phosphate dehydrogenase [NAD(P)+] from Dehalococcoides mccartyi (strain ATCC BAA-2266 / KCTC 15142 / 195) (Dehalococcoides ethenogenes (strain 195)).